We begin with the raw amino-acid sequence, 240 residues long: Diglucosylglycerate octanoyltransferase (240 aa).

The protein belongs to the OctT acyltransferase family. In terms of assembly, homotetramer.

The catalysed reaction is (2R)-2-O-[alpha-D-glucopyranosyl-(1-&gt;6)-alpha-D-glucopyranosyl]-glycerate + octanoyl-CoA = (2R)-2-O-[6-O-octanoyl-alpha-D-glucopyranosyl-(1-&gt;6)-alpha-D-glucopyranosyl]-glycerate + CoA. Its function is as follows. Sugar octanoyltransferase likely involved in the biosynthesis of mycobacterial methylglucose lipopolysaccharide (MGLP). Catalyzes the transfer of an octanoyl group from octanoyl-CoA to the C6 OH of the second glucose in diglucosylglycerate (DGG). Can also use hexanoyl-CoA as acyl donor in vitro. DGG is the preferred acceptor, but to a lesser extent, GG (glucosylglycerate) can be used as substrate. DGG and GG are the two earliest intermediates in MGLP biosynthesis. The protein is Diglucosylglycerate octanoyltransferase of Mycolicibacterium hassiacum (strain DSM 44199 / CIP 105218 / JCM 12690 / 3849) (Mycobacterium hassiacum).